The chain runs to 227 residues: UPF0758 protein Pcryo_2119 (227 aa).

The 123-residue stretch at 102-224 (GLGRSQMVKD…TLSYAENSLP (123 aa)) folds into the MPN domain. Positions 173, 175, and 186 each coordinate Zn(2+). The JAMM motif motif lies at 173 to 186 (HNHPHTDAKPSTAD).

Belongs to the UPF0758 family.

This is UPF0758 protein Pcryo_2119 from Psychrobacter cryohalolentis (strain ATCC BAA-1226 / DSM 17306 / VKM B-2378 / K5).